The sequence spans 500 residues: Probable glycine dehydrogenase (decarboxylating) subunit 2 (500 aa).

Position 273 is an N6-(pyridoxal phosphate)lysine (Lys-273).

The protein belongs to the GcvP family. C-terminal subunit subfamily. As to quaternary structure, the glycine cleavage system is composed of four proteins: P, T, L and H. In this organism, the P 'protein' is a heterodimer of two subunits. Pyridoxal 5'-phosphate serves as cofactor.

It catalyses the reaction N(6)-[(R)-lipoyl]-L-lysyl-[glycine-cleavage complex H protein] + glycine + H(+) = N(6)-[(R)-S(8)-aminomethyldihydrolipoyl]-L-lysyl-[glycine-cleavage complex H protein] + CO2. Its function is as follows. The glycine cleavage system catalyzes the degradation of glycine. The P protein binds the alpha-amino group of glycine through its pyridoxal phosphate cofactor; CO(2) is released and the remaining methylamine moiety is then transferred to the lipoamide cofactor of the H protein. The polypeptide is Probable glycine dehydrogenase (decarboxylating) subunit 2 (Rhodopirellula baltica (strain DSM 10527 / NCIMB 13988 / SH1)).